A 433-amino-acid polypeptide reads, in one-letter code: Steroid hormone receptor ERR2 (433 aa).

Positions Met-1–Ser-38 are disordered. The segment at Tyr-93–Lys-211 is interaction with NANOG. A DNA-binding region (nuclear receptor) is located at residues Lys-100–Lys-186. 2 NR C4-type zinc fingers span residues Cys-103 to Cys-123 and Cys-139 to Cys-163. Positions Pro-203–Val-433 are essential for ESRRB transcriptional activity and interaction with NCOA3. The 225-residue stretch at Pro-208–Lys-432 folds into the NR LBD domain.

The protein belongs to the nuclear hormone receptor family. NR3 subfamily. In terms of assembly, binds DNA as a monomer. Interacts with NR0B1; represses ESRRB activity at the GATA6 promoter. Interacts with NANOG; reciprocally modulates their transcriptional activities and activates POU5F1 expression. Interacts with NCOA3; mediates the interaction between ESRRB and RNA polymerase II complexes and allows NCOA3 corecruitment to ESRRB, KLF4, NANOG, and SOX2 enhancer regions to trigger ESRRB-dependent gene activation involved in self-renewal and pluripotency. Interacts with KDM1A; co-occupes the core set of ESRRB targets including ELF5 and EOMES. Interacts with the multiprotein complex Integrator, at least composed of INTS1, INTS2, INTS3, INTS4, INTS5, INTS6, INTS7, INTS8, INTS9/RC74, INTS10, INTS11/CPSF3L and INTS12; ESRRB is probably not a core component of the integrator complex and associates to integrator via its interaction with INTS1 and INTS9; attracts the transcriptional machinery. Interacts with JARID2. Interacts with POU5F1; recruits ESRRB near the POU5F1-SOX2 element in the NANOG proximal promoter leading to activation of NANOG expression; the interaction is DNA independent. In terms of processing, acetylated by PCAF/KAT2 (in vitro). As to expression, highly expressed in undifferentiated ESCs. Expressed in immature horizontal cells and in rod photoreceptors at intermediate and late stages of differentiation. Expressed in endolymph-producing epithelial cells.

It is found in the nucleus. The protein localises to the cytoplasm. The protein resides in the chromosome. Functionally, transcription factor that binds a canonical ESRRB recognition (ERRE) sequence 5'TCAAGGTCA-3' localized on promoter and enhancer of targets genes regulating their expression or their transcriptional activity. Plays a role, in a LIF-independent manner, in maintainance of self-renewal and pluripotency of embryonic and trophoblast stem cells through different signaling pathways including FGF signaling pathway and Wnt signaling pathways. Involved in morula development (2-16 cells embryos) by acting as a regulator at the 8-cell stage. Upon FGF signaling pathway activation, interacts with KDM1A by directly binding to enhancer site of ELF5 and EOMES and activating their transcription leading to self-renewal of trophoblast stem cells. Also regulates expression of multiple rod-specific genes and is required for survival of this cell type. Plays a role as transcription factor activator of GATA6, NR0B1, POU5F1 and PERM1. Plays a role as transcription factor repressor of NFE2L2 transcriptional activity and ESR1 transcriptional activity. During mitosis remains bound to a subset of interphase target genes, including pluripotency regulators, through the canonical ESRRB recognition (ERRE) sequence, leading to their transcriptional activation in early G1 phase. Can coassemble on structured DNA elements with other transcription factors like SOX2, POU5F1, KDM1A and NCOA3 to trigger ESRRB-dependent gene activation. This mechanism, in the case of SOX2 corecruitment prevents the embryonic stem cells (ESCs) to epiblast stem cells (EpiSC) transition through positive regulation of NR0B1 that inhibits the EpiSC transcriptional program. Also plays a role inner ear development by controlling expression of ion channels and transporters and in early placentation. The chain is Steroid hormone receptor ERR2 from Mus musculus (Mouse).